The chain runs to 194 residues: 3-isopropylmalate dehydratase small subunit (194 aa).

It belongs to the LeuD family. LeuD type 1 subfamily. As to quaternary structure, heterodimer of LeuC and LeuD.

The enzyme catalyses (2R,3S)-3-isopropylmalate = (2S)-2-isopropylmalate. It participates in amino-acid biosynthesis; L-leucine biosynthesis; L-leucine from 3-methyl-2-oxobutanoate: step 2/4. In terms of biological role, catalyzes the isomerization between 2-isopropylmalate and 3-isopropylmalate, via the formation of 2-isopropylmaleate. This is 3-isopropylmalate dehydratase small subunit from Bacillus cereus (strain ATCC 14579 / DSM 31 / CCUG 7414 / JCM 2152 / NBRC 15305 / NCIMB 9373 / NCTC 2599 / NRRL B-3711).